The sequence spans 148 residues: Deoxyuridine 5'-triphosphate nucleotidohydrolase (148 aa).

DUMP is bound by residues Ser69, Gly82, Asp85, Tyr88, Arg137, Phe142, and Gly143.

It belongs to the dUTPase family. In terms of assembly, homotrimer. The cofactor is Mg(2+).

It carries out the reaction dUTP + H2O = dUMP + diphosphate + H(+). The protein operates within pyrimidine metabolism; dUMP biosynthesis; dUMP from dCTP (dUTP route): step 2/2. Functionally, involved in nucleotide metabolism via production of dUMP, the immediate precursor of thymidine nucleotides, and decreases the intracellular concentration of dUTP so that uracil cannot be incorporated into DNA. The polypeptide is Deoxyuridine 5'-triphosphate nucleotidohydrolase (DUT1) (Kluyveromyces lactis (strain ATCC 8585 / CBS 2359 / DSM 70799 / NBRC 1267 / NRRL Y-1140 / WM37) (Yeast)).